Reading from the N-terminus, the 600-residue chain is Molybdenum cofactor biosynthesis protein moc-5 (600 aa).

The interval 4-371 (RAGKKLFQWS…AVNNKKARHA (368 aa)) is molybdenum cofactor biosynthesis protein A. Positions 68-284 (MFMREHTYLR…VDKYGDGVIR (217 aa)) constitute a Radical SAM core domain. Arg-77 serves as a coordination point for GTP. The [4Fe-4S] cluster site is built by Cys-84 and Cys-88. Position 90 (Tyr-90) interacts with S-adenosyl-L-methionine. Cys-91 contributes to the [4Fe-4S] cluster binding site. Arg-127 serves as a coordination point for GTP. Gly-131 contributes to the S-adenosyl-L-methionine binding site. Residue Thr-158 participates in GTP binding. Ser-182 contacts S-adenosyl-L-methionine. Lys-218 contacts GTP. Met-252 contributes to the S-adenosyl-L-methionine binding site. Positions 316 and 319 each coordinate [4Fe-4S] cluster. A GTP-binding site is contributed by 321 to 323 (RLR). Cys-333 is a binding site for [4Fe-4S] cluster. The tract at residues 369–390 (RHAVFRNGRSEEPAKSSNDSYR) is disordered. A molybdenum cofactor biosynthesis protein C region spans residues 396-595 (TSASSILVHL…SGGKTTYTID (200 aa)). Asp-566 acts as the For molybdenum cofactor biosynthesis protein C activity in catalysis.

In the C-terminal section; belongs to the MoaC family. The protein in the N-terminal section; belongs to the radical SAM superfamily. MoaA family. As to quaternary structure, isoform a and isoform b probably form a heterooligomer. Requires [4Fe-4S] cluster as cofactor.

It catalyses the reaction GTP + AH2 + S-adenosyl-L-methionine = (8S)-3',8-cyclo-7,8-dihydroguanosine 5'-triphosphate + 5'-deoxyadenosine + L-methionine + A + H(+). It carries out the reaction (8S)-3',8-cyclo-7,8-dihydroguanosine 5'-triphosphate = cyclic pyranopterin phosphate + diphosphate. It functions in the pathway cofactor biosynthesis; molybdopterin biosynthesis. Functionally, probably forms a complex with isoform b that catalyzes the conversion of 5'-GTP to cyclic pyranopterin monophosphate (cPMP). Catalyzes the cyclization of GTP to (8S)-3',8-cyclo-7,8-dihydroguanosine 5'-triphosphate and mocs1b catalyzes the subsequent conversion of (8S)-3',8-cyclo-7,8-dihydroguanosine 5'-triphosphate to cPMP. Probably forms a complex with isoform a that catalyzes the conversion of 5'-GTP to cyclic pyranopterin monophosphate (cPMP). The protein is Molybdenum cofactor biosynthesis protein moc-5 of Caenorhabditis elegans.